The following is a 793-amino-acid chain: Ent-copalyl diphosphate synthase, chloroplastic (793 aa).

Residues 1–47 constitute a chloroplast transit peptide; sequence MPLASNPVAFLPSSTAHGDLPAAAFSRSSAGCLQLCRPLTPTSSLQC. Mg(2+) is bound by residues Asp372 and Asp374. Residues 372 to 375 carry the DXDD motif motif; that stretch reads DIDD.

Belongs to the terpene synthase family. Mg(2+) is required as a cofactor.

It localises to the plastid. The protein resides in the chloroplast. The catalysed reaction is (2E,6E,10E)-geranylgeranyl diphosphate = ent-copalyl diphosphate. It functions in the pathway plant hormone biosynthesis; gibberellin biosynthesis. Its function is as follows. Catalyzes the conversion of geranylgeranyl diphosphate (GGPP) to the gibberellin precursor ent-copalyl diphosphate (CPP). The chain is Ent-copalyl diphosphate synthase, chloroplastic from Salvia miltiorrhiza (Chinese sage).